Reading from the N-terminus, the 376-residue chain is MNAQHSSADLRDVIRNAKRIVVKIGSSSLTGENFEVSPGRIDRIVEALEDRMHRGSDVIVVSSGAVAAGMAPLGLTSRPKDLATKQAAASVGQVHLANAWGNSFARYNRTIGQVLLTASDAGQRDRARNAQRTIDRLRLLHAVPIINENDTVATSEMHFGDNDRLAAIVSHLVSADALVLLSDVDGLYDKNPADPSARFVSEVRDGNDLKGVIAGDGGAVGTGGMASKVSAARLASRSGVPVLLTSADYVAEALGDAEVGTVFYPKDDRLSAWKFWALYAADTGGALRIDAGAVAAVTAGGNSLLAVGITEVIGDFHAGEIVEILGPEGEIIGRGEVAYDSAVLITMLGKQTAQLPEGLQRPVVHADYLSDYASRA.

Residue K23 coordinates ATP. Substrate-binding residues include S63, D150, and N162. ATP contacts are provided by residues 182-183 (SD) and 222-228 (TGGMASK). A PUA domain is found at 284–358 (GGALRIDAGA…GKQTAQLPEG (75 aa)).

This sequence belongs to the glutamate 5-kinase family.

The protein resides in the cytoplasm. The catalysed reaction is L-glutamate + ATP = L-glutamyl 5-phosphate + ADP. Its pathway is amino-acid biosynthesis; L-proline biosynthesis; L-glutamate 5-semialdehyde from L-glutamate: step 1/2. Catalyzes the transfer of a phosphate group to glutamate to form L-glutamate 5-phosphate. This chain is Glutamate 5-kinase, found in Corynebacterium diphtheriae (strain ATCC 700971 / NCTC 13129 / Biotype gravis).